The following is a 228-amino-acid chain: Large ribosomal subunit protein uL3 (228 aa).

Gln151 is modified (N5-methylglutamine).

It belongs to the universal ribosomal protein uL3 family. Part of the 50S ribosomal subunit. Forms a cluster with proteins L14 and L19. Post-translationally, methylated by PrmB.

Functionally, one of the primary rRNA binding proteins, it binds directly near the 3'-end of the 23S rRNA, where it nucleates assembly of the 50S subunit. This Rhizobium meliloti (strain 1021) (Ensifer meliloti) protein is Large ribosomal subunit protein uL3.